The sequence spans 129 residues: Small ribosomal subunit protein uS12 (129 aa).

Disordered regions lie at residues 1–25 and 110–129; these read MPTY…PALE and RKQG…VTKK. The span at 10-20 shows a compositional bias: basic residues; that stretch reads FGRKSKTRKTK.

The protein belongs to the universal ribosomal protein uS12 family. As to quaternary structure, part of the 30S ribosomal subunit. Contacts proteins S8 and S17. May interact with IF1 in the 30S initiation complex.

Functionally, with S4 and S5 plays an important role in translational accuracy. In terms of biological role, interacts with and stabilizes bases of the 16S rRNA that are involved in tRNA selection in the A site and with the mRNA backbone. Located at the interface of the 30S and 50S subunits, it traverses the body of the 30S subunit contacting proteins on the other side and probably holding the rRNA structure together. The combined cluster of proteins S8, S12 and S17 appears to hold together the shoulder and platform of the 30S subunit. The chain is Small ribosomal subunit protein uS12 from Rickettsia conorii (strain ATCC VR-613 / Malish 7).